We begin with the raw amino-acid sequence, 500 residues long: Glucokinase-1 (500 aa).

S2 carries the post-translational modification N-acetylserine. S2 carries the post-translational modification Phosphoserine. The region spanning 12 to 498 (RAVIQAVDQI…SGVGAALCAL (487 aa)) is the Hexokinase domain. A hexokinase small subdomain region spans residues 74–216 (NGTERGVLLA…MPMIKVVALT (143 aa)). K110 contacts ATP. The tract at residues 158–184 (KLGFTFSYPVDQTSLNSGTLIRWTKGF) is glucose-binding. The tract at residues 217-487 (NDTVGTYLSH…RKVHLKIAKD (271 aa)) is hexokinase large subdomain. S470 carries the phosphoserine modification. 487–492 (DGSGVG) serves as a coordination point for ATP.

Belongs to the hexokinase family. In terms of assembly, monomer.

The enzyme catalyses D-glucose + ATP = D-glucose 6-phosphate + ADP + H(+). The protein operates within carbohydrate metabolism; hexose metabolism. It participates in carbohydrate degradation; glycolysis; D-glyceraldehyde 3-phosphate and glycerone phosphate from D-glucose: step 1/4. Its function is as follows. Two isoenzymes, hexokinase-1 and hexokinase-2, can phosphorylate keto- and aldohexoses in yeast, whereas a third isoenzyme, GLK, is specific for aldohexoses. All glucose phosphorylating enzymes are involved in glucose uptake. The polypeptide is Glucokinase-1 (GLK1) (Saccharomyces cerevisiae (strain ATCC 204508 / S288c) (Baker's yeast)).